A 496-amino-acid polypeptide reads, in one-letter code: Galactose-1-phosphate uridylyltransferase (496 aa).

The protein belongs to the galactose-1-phosphate uridylyltransferase type 2 family.

The protein resides in the cytoplasm. The catalysed reaction is alpha-D-galactose 1-phosphate + UDP-alpha-D-glucose = alpha-D-glucose 1-phosphate + UDP-alpha-D-galactose. Its pathway is carbohydrate metabolism; galactose metabolism. The sequence is that of Galactose-1-phosphate uridylyltransferase from Staphylococcus saprophyticus subsp. saprophyticus (strain ATCC 15305 / DSM 20229 / NCIMB 8711 / NCTC 7292 / S-41).